The following is a 315-amino-acid chain: Homoserine kinase (315 aa).

97 to 107 (PPARGLGSSAT) contributes to the ATP binding site.

The protein belongs to the GHMP kinase family. Homoserine kinase subfamily.

The protein resides in the cytoplasm. It carries out the reaction L-homoserine + ATP = O-phospho-L-homoserine + ADP + H(+). Its pathway is amino-acid biosynthesis; L-threonine biosynthesis; L-threonine from L-aspartate: step 4/5. Its function is as follows. Catalyzes the ATP-dependent phosphorylation of L-homoserine to L-homoserine phosphate. The chain is Homoserine kinase from Synechococcus sp. (strain CC9605).